The chain runs to 1197 residues: ATP-dependent helicase/nuclease subunit A (1197 aa).

The UvrD-like helicase ATP-binding domain maps to 2–458 (KNWTTEQQAA…IDLAKNFRSR (457 aa)). 23 to 30 (AAAGSGKT) is an ATP binding site. The region spanning 485-774 (RAALYQGASF…RIMSIHKSKG (290 aa)) is the UvrD-like helicase C-terminal domain.

This sequence belongs to the helicase family. AddA subfamily. As to quaternary structure, heterodimer of AddA and AddB/RexB. The cofactor is Mg(2+).

The catalysed reaction is Couples ATP hydrolysis with the unwinding of duplex DNA by translocating in the 3'-5' direction.. It catalyses the reaction ATP + H2O = ADP + phosphate + H(+). Functionally, the heterodimer acts as both an ATP-dependent DNA helicase and an ATP-dependent, dual-direction single-stranded exonuclease. Recognizes the chi site generating a DNA molecule suitable for the initiation of homologous recombination. The AddA nuclease domain is required for chi fragment generation; this subunit has the helicase and 3' -&gt; 5' nuclease activities. This is ATP-dependent helicase/nuclease subunit A from Alkaliphilus metalliredigens (strain QYMF).